We begin with the raw amino-acid sequence, 490 residues long: tRNA-guanine(15) transglycosylase (490 aa).

Aspartate 90 serves as the catalytic Nucleophile. Residues aspartate 125 and alanine 193 each coordinate substrate. Zn(2+) contacts are provided by cysteine 276, cysteine 278, and cysteine 281.

Belongs to the archaeosine tRNA-ribosyltransferase family. The cofactor is Zn(2+).

The enzyme catalyses guanosine(15) in tRNA + 7-cyano-7-deazaguanine = 7-cyano-7-carbaguanosine(15) in tRNA + guanine. It participates in tRNA modification; archaeosine-tRNA biosynthesis. Its function is as follows. Exchanges the guanine residue with 7-cyano-7-deazaguanine (preQ0) at position 15 in the dihydrouridine loop (D-loop) of archaeal tRNAs. This chain is tRNA-guanine(15) transglycosylase, found in Methanosarcina acetivorans (strain ATCC 35395 / DSM 2834 / JCM 12185 / C2A).